Reading from the N-terminus, the 206-residue chain is MAITAQMVKALREKTGVGMMDCKKALAECDGNEENAIKYLREKGLAKAAKKAGRATSEGLVGTYTHSNGKLVAMVELKCETDFVAKAEQFIQLSKDLAMQVAATSPVCVKPEDLPQEMLEKEKEIYKQQAIAEGKPENIAEKIVEGRVNKYYKEVCLLEQPFIKDDKKTIKDLLNDTIAVLGENMQIGRFARINLAEAVAEESEAE.

The interval 81–84 (TDFV) is involved in Mg(2+) ion dislocation from EF-Tu.

Belongs to the EF-Ts family.

It is found in the cytoplasm. Its function is as follows. Associates with the EF-Tu.GDP complex and induces the exchange of GDP to GTP. It remains bound to the aminoacyl-tRNA.EF-Tu.GTP complex up to the GTP hydrolysis stage on the ribosome. This chain is Elongation factor Ts, found in Maridesulfovibrio salexigens (strain ATCC 14822 / DSM 2638 / NCIMB 8403 / VKM B-1763) (Desulfovibrio salexigens).